Reading from the N-terminus, the 408-residue chain is MSVDDSADVVVVGAGPAGSAAAAWAARAGRDVLVIDTATFPRDKPCGDGLTPRAVAELHQLGLGKWLADHIRHRGLRMSGFGGEVEVDWPGPSFPSYGSAVARLELDDRIRKVAEDTGARMLLGAKAVAVHHDSSRRVVSLTLADGTEVGCRQLIVADGARSPLGRKLGRRWHRETVYGVAVRGYLSTAYSDDPWLTSHLELRSPDGAVLPGYGWIFPLGNGEVNIGVGALSTSRRPADLALRPLISYYTDLRRDEWGFTGQPRAVSSALLPMGGAVSGVAGSNWMLIGDAAACVNPLNGEGIDYGLETGRLAAELLDSRDLARLWPSLLADRYGRGFSVARRLALLLTFPRFLPTTGPITMRSTALMNIAVRVMSNLVTDDDRDWVARVWRGGGQLSRLVDRRPPFS.

FAD is bound by residues Gly13–Ala17, Cys46–Gly49, Arg103, Ala127, Asp290, and Gly302–Ile303.

Belongs to the geranylgeranyl reductase family. FAD is required as a cofactor.

The catalysed reaction is menaquinone-9 + AH2 = beta-dihydromenaquinone-9 + A. Its pathway is quinol/quinone metabolism; menaquinone biosynthesis. In terms of biological role, catalyzes the reduction of a single double bond in the isoprenoid tail of menaquinone (MK-9) in M.tuberculosis, likely the beta-isoprene unit, forming the predominant form of menaquinone found in mycobacteria, MK-9(II-H2). The chain is Menaquinone reductase from Mycobacterium tuberculosis (strain CDC 1551 / Oshkosh).